The primary structure comprises 116 residues: Large ribosomal subunit protein bL19 (116 aa).

Belongs to the bacterial ribosomal protein bL19 family.

This protein is located at the 30S-50S ribosomal subunit interface and may play a role in the structure and function of the aminoacyl-tRNA binding site. The chain is Large ribosomal subunit protein bL19 from Staphylococcus aureus (strain Mu3 / ATCC 700698).